Reading from the N-terminus, the 310-residue chain is Methionyl-tRNA formyltransferase (310 aa).

111 to 114 (SILP) contacts (6S)-5,6,7,8-tetrahydrofolate.

Belongs to the Fmt family.

It carries out the reaction L-methionyl-tRNA(fMet) + (6R)-10-formyltetrahydrofolate = N-formyl-L-methionyl-tRNA(fMet) + (6S)-5,6,7,8-tetrahydrofolate + H(+). Attaches a formyl group to the free amino group of methionyl-tRNA(fMet). The formyl group appears to play a dual role in the initiator identity of N-formylmethionyl-tRNA by promoting its recognition by IF2 and preventing the misappropriation of this tRNA by the elongation apparatus. This chain is Methionyl-tRNA formyltransferase, found in Methylobacterium sp. (strain 4-46).